We begin with the raw amino-acid sequence, 502 residues long: Beta-amyrin 28-monooxygenase CYP716A379 (502 aa).

The chain crosses the membrane as a helical; Signal-anchor for type II membrane protein span at residues L3 to V23. N88 and N181 each carry an N-linked (GlcNAc...) asparagine glycan. A heme-binding site is contributed by C444.

Belongs to the cytochrome P450 family. It depends on heme as a cofactor. As to expression, mainly expressed in flowers and flower buds, to a lesser extent in young leaves and, at low levels, in old leaves, stems and roots.

Its subcellular location is the membrane. It carries out the reaction beta-amyrin + 3 reduced [NADPH--hemoprotein reductase] + 3 O2 = oleanolate + 3 oxidized [NADPH--hemoprotein reductase] + 4 H2O + 4 H(+). It functions in the pathway secondary metabolite biosynthesis; terpenoid biosynthesis. Functionally, component of the oleanane-type triterpene saponins (e.g. saponarioside A and saponarioside B) biosynthetic pathway, leading to the production of natural products with detergent properties used as traditional sources of soap. An oxidoreductase that facilitates the oxidation of the methyl group to a carboxyl group at the C-28 position of beta-amyrin, resulting in the formation of oleanolic acid. Catalyzes also the subsequent oxidation of the methyl group to a&lt; carboxyl group at the C-16 alpha position of oleanolic acid, resulting in the formation of echinocystic acid. This Saponaria officinalis (Common soapwort) protein is Beta-amyrin 28-monooxygenase CYP716A379.